The primary structure comprises 275 residues: Large ribosomal subunit protein uL2 (275 aa).

2 disordered regions span residues 28-59 (KPFAPLLDSQSTTAGRNNNGHITTRHKGGGHK) and 224-275 (AMNP…RHKR). Polar residues predominate over residues 35 to 49 (DSQSTTAGRNNNGHI). Basic residues predominate over residues 50–59 (TTRHKGGGHK).

It belongs to the universal ribosomal protein uL2 family. Part of the 50S ribosomal subunit. Forms a bridge to the 30S subunit in the 70S ribosome.

In terms of biological role, one of the primary rRNA binding proteins. Required for association of the 30S and 50S subunits to form the 70S ribosome, for tRNA binding and peptide bond formation. It has been suggested to have peptidyltransferase activity; this is somewhat controversial. Makes several contacts with the 16S rRNA in the 70S ribosome. In Paraburkholderia xenovorans (strain LB400), this protein is Large ribosomal subunit protein uL2.